Here is a 598-residue protein sequence, read N- to C-terminus: Arginine--tRNA ligase (598 aa).

Positions 139–149 (ANPTGPMHVGH) match the 'HIGH' region motif.

This sequence belongs to the class-I aminoacyl-tRNA synthetase family. As to quaternary structure, monomer.

The protein localises to the cytoplasm. The enzyme catalyses tRNA(Arg) + L-arginine + ATP = L-arginyl-tRNA(Arg) + AMP + diphosphate. The sequence is that of Arginine--tRNA ligase from Bradyrhizobium sp. (strain ORS 278).